The following is a 445-amino-acid chain: 3-phosphoshikimate 1-carboxyvinyltransferase (445 aa).

Positions 21, 22, and 26 each coordinate 3-phosphoshikimate. K21 is a binding site for phosphoenolpyruvate. 2 residues coordinate phosphoenolpyruvate: G92 and R120. 3-phosphoshikimate-binding residues include S165, Q166, D307, and K334. Q166 provides a ligand contact to phosphoenolpyruvate. D307 (proton acceptor) is an active-site residue. Phosphoenolpyruvate contacts are provided by R338, R379, and K405.

The protein belongs to the EPSP synthase family. As to quaternary structure, monomer.

It localises to the cytoplasm. The enzyme catalyses 3-phosphoshikimate + phosphoenolpyruvate = 5-O-(1-carboxyvinyl)-3-phosphoshikimate + phosphate. It participates in metabolic intermediate biosynthesis; chorismate biosynthesis; chorismate from D-erythrose 4-phosphate and phosphoenolpyruvate: step 6/7. Its function is as follows. Catalyzes the transfer of the enolpyruvyl moiety of phosphoenolpyruvate (PEP) to the 5-hydroxyl of shikimate-3-phosphate (S3P) to produce enolpyruvyl shikimate-3-phosphate and inorganic phosphate. The polypeptide is 3-phosphoshikimate 1-carboxyvinyltransferase (Chlamydia felis (strain Fe/C-56) (Chlamydophila felis)).